The sequence spans 149 residues: Large ribosomal subunit protein uL13 (149 aa).

It belongs to the universal ribosomal protein uL13 family. As to quaternary structure, part of the 50S ribosomal subunit.

This protein is one of the early assembly proteins of the 50S ribosomal subunit, although it is not seen to bind rRNA by itself. It is important during the early stages of 50S assembly. This Borrelia hermsii (strain HS1 / DAH) protein is Large ribosomal subunit protein uL13.